We begin with the raw amino-acid sequence, 312 residues long: Glycerol-3-phosphate phosphatase (312 aa).

The Nucleophile role is filled by Asp30. The Mg(2+) site is built by Asp30, Asp32, and Asp251. Asp32 functions as the Proton donor in the catalytic mechanism.

The protein belongs to the HAD-like hydrolase superfamily. CbbY/CbbZ/Gph/YieH family. In terms of assembly, homodimer. Mg(2+) is required as a cofactor.

It catalyses the reaction O-phospho-L-tyrosyl-[protein] + H2O = L-tyrosyl-[protein] + phosphate. The catalysed reaction is sn-glycerol 1-phosphate + H2O = glycerol + phosphate. The enzyme catalyses sn-glycerol 3-phosphate + H2O = glycerol + phosphate. Glycerol-3-phosphate phosphatase hydrolyzing glycerol-3-phosphate into glycerol. Thereby, regulates the cellular levels of glycerol-3-phosphate a metabolic intermediate of glucose, lipid and energy metabolism. Was also shown to have a 2-phosphoglycolate phosphatase activity and a tyrosine-protein phosphatase activity. However, their physiological relevance is unclear. In vitro, also has a phosphatase activity toward ADP, ATP, GDP and GTP. The sequence is that of Glycerol-3-phosphate phosphatase from Gallus gallus (Chicken).